An 85-amino-acid polypeptide reads, in one-letter code: Toxin BmKaTX15 (85 aa).

Positions 1 to 19 (MNYLVFFSLALLVMTGVES) are cleaved as a signal peptide. The region spanning 21 to 83 (RDGYIADDKN…VPIRVPGKCN (63 aa)) is the LCN-type CS-alpha/beta domain. 4 disulfides stabilise this stretch: Cys31–Cys82, Cys35–Cys55, Cys41–Cys65, and Cys45–Cys67.

This sequence belongs to the long (4 C-C) scorpion toxin superfamily. Sodium channel inhibitor family. Alpha subfamily. In terms of tissue distribution, expressed by the venom gland.

Its subcellular location is the secreted. Alpha toxins bind voltage-independently at site-3 of sodium channels (Nav) and inhibit the inactivation of the activated channels, thereby blocking neuronal transmission. This Olivierus martensii (Manchurian scorpion) protein is Toxin BmKaTX15.